The sequence spans 72 residues: Exodeoxyribonuclease 7 small subunit (72 aa).

This sequence belongs to the XseB family. In terms of assembly, heterooligomer composed of large and small subunits.

It is found in the cytoplasm. The catalysed reaction is Exonucleolytic cleavage in either 5'- to 3'- or 3'- to 5'-direction to yield nucleoside 5'-phosphates.. Functionally, bidirectionally degrades single-stranded DNA into large acid-insoluble oligonucleotides, which are then degraded further into small acid-soluble oligonucleotides. The polypeptide is Exodeoxyribonuclease 7 small subunit (Chlamydia trachomatis serovar L2 (strain ATCC VR-902B / DSM 19102 / 434/Bu)).